A 452-amino-acid chain; its full sequence is Methionine aminopeptidase 2 (452 aa).

The interval 1 to 96 (MAVQALPEIN…VPLSTLFPNN (96 aa)) is disordered. The segment covering 18–35 (GAANAAAKGQAAQGTAGN) has biased composition (low complexity). Acidic residues predominate over residues 36–53 (DDAENDESDEDKEDEQEV). Residues 62–77 (GKKKKKKTKKKKKKGT) show a composition bias toward basic residues. Histidine 202 contributes to the substrate binding site. A divalent metal cation-binding residues include aspartate 222, aspartate 233, and histidine 302. Histidine 310 serves as a coordination point for substrate. A divalent metal cation contacts are provided by glutamate 338 and glutamate 433.

It belongs to the peptidase M24A family. Methionine aminopeptidase eukaryotic type 2 subfamily. Co(2+) is required as a cofactor. Requires Zn(2+) as cofactor. The cofactor is Mn(2+). Fe(2+) serves as cofactor.

The protein localises to the cytoplasm. The catalysed reaction is Release of N-terminal amino acids, preferentially methionine, from peptides and arylamides.. In terms of biological role, cotranslationally removes the N-terminal methionine from nascent proteins. The N-terminal methionine is often cleaved when the second residue in the primary sequence is small and uncharged (Met-Ala-, Cys, Gly, Pro, Ser, Thr, or Val). This chain is Methionine aminopeptidase 2, found in Coccidioides posadasii (strain C735) (Valley fever fungus).